The primary structure comprises 273 residues: Peptidoglycan-N-acetylglucosamine deacetylase BC_1974 (273 aa).

A helical membrane pass occupies residues isoleucine 10–isoleucine 30. The NodB homology domain occupies lysine 69–glutamate 255. Aspartate 76 (proton acceptor) is an active-site residue. The Zn(2+) site is built by aspartate 77, histidine 126, and histidine 130. Histidine 230 (proton donor) is an active-site residue.

This sequence belongs to the polysaccharide deacetylase family. The cofactor is Zn(2+). It depends on Co(2+) as a cofactor. Ni(2+) serves as cofactor.

Its subcellular location is the cell membrane. The catalysed reaction is peptidoglycan-N-acetyl-D-glucosamine + H2O = peptidoglycan-D-glucosamine + acetate.. Its activity is regulated as follows. Inhibited by the hydroxamate N-hydroxy-4-(naphthalene-1-yl)benzamide (NHNB). Functionally, catalyzes the deacetylation of N-acetylglucosamine (GlcNAc) residues in peptidoglycan. This Bacillus cereus (strain ATCC 14579 / DSM 31 / CCUG 7414 / JCM 2152 / NBRC 15305 / NCIMB 9373 / NCTC 2599 / NRRL B-3711) protein is Peptidoglycan-N-acetylglucosamine deacetylase BC_1974.